Consider the following 384-residue polypeptide: Cobalt-precorrin-5B C(1)-methyltransferase (384 aa).

This sequence belongs to the CbiD family.

The enzyme catalyses Co-precorrin-5B + S-adenosyl-L-methionine = Co-precorrin-6A + S-adenosyl-L-homocysteine. It functions in the pathway cofactor biosynthesis; adenosylcobalamin biosynthesis; cob(II)yrinate a,c-diamide from sirohydrochlorin (anaerobic route): step 6/10. In terms of biological role, catalyzes the methylation of C-1 in cobalt-precorrin-5B to form cobalt-precorrin-6A. This Marinomonas sp. (strain MWYL1) protein is Cobalt-precorrin-5B C(1)-methyltransferase.